The sequence spans 112 residues: Integration host factor subunit alpha (112 aa).

The protein belongs to the bacterial histone-like protein family. Heterodimer of an alpha and a beta chain.

This protein is one of the two subunits of integration host factor, a specific DNA-binding protein that functions in genetic recombination as well as in transcriptional and translational control. The sequence is that of Integration host factor subunit alpha from Sinorhizobium fredii (strain NBRC 101917 / NGR234).